The chain runs to 229 residues: Flagellar L-ring protein (229 aa).

The N-terminal stretch at 1-25 is a signal peptide; that stretch reads MKQVRLLPSATVRAACAVAVAALAG. The N-palmitoyl cysteine moiety is linked to residue cysteine 26. Cysteine 26 is lipidated: S-diacylglycerol cysteine.

The protein belongs to the FlgH family. The basal body constitutes a major portion of the flagellar organelle and consists of four rings (L,P,S, and M) mounted on a central rod.

Its subcellular location is the cell outer membrane. The protein resides in the bacterial flagellum basal body. Its function is as follows. Assembles around the rod to form the L-ring and probably protects the motor/basal body from shearing forces during rotation. The polypeptide is Flagellar L-ring protein (Burkholderia vietnamiensis (strain G4 / LMG 22486) (Burkholderia cepacia (strain R1808))).